Here is a 211-residue protein sequence, read N- to C-terminus: FMN-dependent NADH:quinone oxidoreductase (211 aa).

FMN is bound by residues S10 and 16 to 18 (SVS).

It belongs to the azoreductase type 1 family. In terms of assembly, homodimer. It depends on FMN as a cofactor.

The catalysed reaction is 2 a quinone + NADH + H(+) = 2 a 1,4-benzosemiquinone + NAD(+). It catalyses the reaction N,N-dimethyl-1,4-phenylenediamine + anthranilate + 2 NAD(+) = 2-(4-dimethylaminophenyl)diazenylbenzoate + 2 NADH + 2 H(+). Functionally, quinone reductase that provides resistance to thiol-specific stress caused by electrophilic quinones. In terms of biological role, also exhibits azoreductase activity. Catalyzes the reductive cleavage of the azo bond in aromatic azo compounds to the corresponding amines. This is FMN-dependent NADH:quinone oxidoreductase from Parafrankia sp. (strain EAN1pec).